The sequence spans 289 residues: Pantoate kinase (289 aa).

It belongs to the GHMP kinase family. PoK subfamily.

The catalysed reaction is (R)-pantoate + ATP = (R)-4-phosphopantoate + ADP + H(+). The protein operates within cofactor biosynthesis; coenzyme A biosynthesis. Functionally, phosphorylates (R)-pantoate to form (R)-4-phosphopantoate in the CoA biosynthesis pathway. ATP is the best phosphate donor. Can be replaced with UTP, with lower efficiency. The sequence is that of Pantoate kinase from Methanospirillum hungatei JF-1 (strain ATCC 27890 / DSM 864 / NBRC 100397 / JF-1).